The following is a 1864-amino-acid chain: RNA1 polyprotein (1864 aa).

In terms of domain architecture, SF3 helicase spans 457-622 (LERLHRNAAV…VEYQSDDFTA (166 aa)). Residue 483 to 490 (GNSRCGKS) participates in ATP binding. The chain crosses the membrane as a helical span at residues 892–912 (AGNGAGLVGAAVNSFSVVSTA). S916 carries the post-translational modification O-(5'-phospho-RNA)-serine. The region spanning 943 to 1146 (QMSLDQSTVS…MASLLPPLLP (204 aa)) is the Peptidase C3 domain. Active-site for picornain 3C-like protease activity residues include H983, E1019, and C1109. The region spanning 1426-1556 (NDILCCDYSS…SVNAVVKPYF (131 aa)) is the RdRp catalytic domain.

Specific enzymatic cleavages by picornain 3C-like protease in vivo yield mature proteins. Picornain 3C-like protease is autocatalytically processed. In terms of processing, uridylylated by the polymerase and is covalently linked to the 5'-end of genomic RNA. This uridylylated form acts as a nucleotide-peptide primer for the polymerase.

The protein localises to the host membrane. Its subcellular location is the host cytoplasm. The protein resides in the host perinuclear region. It localises to the host endoplasmic reticulum. The enzyme catalyses RNA(n) + a ribonucleoside 5'-triphosphate = RNA(n+1) + diphosphate. Its function is as follows. Thiol protease that cleaves the RNA1 and RNA2 polyproteins. Plays a role in RNA replication. It is covalently linked to the 5'terminus of both viral single-stranded RNA1 and RNA2 molecules. Functionally, down-regulates the RNA1 polyprotein processing and enhances trans-cleavage of RNA2 polyproteins. The protease cofactor and the putative helicase seem to target the replication complexes to ER membranes. Their physical association causes the membrane rearrangement of host ER that may result in formation of the small membranous vesicles that are the site of viral RNA synthesis. In terms of biological role, the protease cofactor and the putative helicase seem to target the replication complexes to ER membranes. Their physical association causes the membrane rearrangement of host ER that may result in formation of the small membranous vesicles that are the site of viral RNA synthesis. Its function is as follows. Replicates the viral genome. This chain is RNA1 polyprotein, found in Trifolium pratense (Red clover).